Consider the following 93-residue polypeptide: Ferredoxin-2 (93 aa).

Residues Tyr-2 to Asp-91 enclose the 2Fe-2S ferredoxin-type domain. Residues Cys-37, Cys-42, Cys-45, and Cys-75 each contribute to the [2Fe-2S] cluster site.

Belongs to the 2Fe2S plant-type ferredoxin family. [2Fe-2S] cluster serves as cofactor.

The protein resides in the plastid. Its subcellular location is the chloroplast. In terms of biological role, ferredoxins are iron-sulfur proteins that transfer electrons in a wide variety of metabolic reactions. This chain is Ferredoxin-2, found in Equisetum telmateia (Great horsetail).